Reading from the N-terminus, the 972-residue chain is N-alpha-acetyltransferase 25, NatB auxiliary subunit (972 aa).

TPR repeat units lie at residues 11–44 (NDRR…HKDL), 45–78 (HCAK…EPTD), 79–112 (DNSL…VPNS), and 114–146 (EYHS…VPKN).

This sequence belongs to the MDM20/NAA25 family. As to quaternary structure, component of the N-terminal acetyltransferase B (NatB) complex which is composed of NAA20 and NAA25.

It localises to the cytoplasm. Functionally, non-catalytic subunit of the NatB complex which catalyzes acetylation of the N-terminal methionine residues of peptides beginning with Met-Asp, Met-Glu, Met-Asn and Met-Gln. May play a role in normal cell-cycle progression. This is N-alpha-acetyltransferase 25, NatB auxiliary subunit (NAA25) from Homo sapiens (Human).